Here is a 701-residue protein sequence, read N- to C-terminus: Acetyl-coenzyme A synthetase, cytoplasmic (701 aa).

Basic and acidic residues predominate over residues 1 to 26 (MGLPEERRKSGSGSRAREETGAEGRV). Residues 1-37 (MGLPEERRKSGSGSRAREETGAEGRVRGWSPPPEVRR) form a disordered region. The segment at 1 to 107 (MGLPEERRKS…GATTNICYNV (107 aa)) is interaction with TFEB. Position 30 is a phosphoserine (S30). Residue 219–222 (RGEK) coordinates CoA. S263, S265, and S267 each carry phosphoserine. T363 lines the CoA pocket. N6-acetyllysine is present on K418. ATP contacts are provided by residues 439–441 (GEP), 463–468 (DTFWQT), D552, and R567. CoA is bound by residues S575 and R636. A Nuclear localization signal motif is present at residues 656–668 (KTRSGKIMRRVLR). S659 carries the phosphoserine; by AMPK modification. The residue at position 661 (K661) is an N6-acetyllysine.

Belongs to the ATP-dependent AMP-binding enzyme family. In terms of assembly, monomer. Interacts with TFEB. AMPK-mediated phosphorylated form at Ser-659 interacts with KPNA1; this interaction results in nuclear translocation of ACSS2. Interacts with the 'Thr-172' phosphorylated form of PRKAA2. Interacts with CREBBP. Post-translationally, reversibly acetylated at Lys-661. The acetyl-CoA synthase activity is inhibited by acetylation and activated by deacetylation mediated by the deacetylases SIRT1 and SIRT3. In terms of tissue distribution, expressed in the hippocampus.

It localises to the cytoplasm. The protein localises to the cytosol. It is found in the nucleus. The enzyme catalyses acetate + ATP + CoA = acetyl-CoA + AMP + diphosphate. The catalysed reaction is propanoate + ATP + CoA = propanoyl-CoA + AMP + diphosphate. Inhibited by acetylation at Lys-661 and activated by deacetylation mediated by the deacetylases SIRT1 and SIRT3. Catalyzes the synthesis of acetyl-CoA from short-chain fatty acids. Acetate is the preferred substrate but can also utilize propionate with a much lower affinity. Nuclear ACSS2 promotes glucose deprivation-induced lysosomal biogenesis and autophagy, tumor cell survival and brain tumorigenesis. Glucose deprivation results in AMPK-mediated phosphorylation of ACSS2 leading to its translocation to the nucleus where it binds to TFEB and locally produces acetyl-CoA for histone acetylation in the promoter regions of TFEB target genes thereby activating their transcription. The regulation of genes associated with autophagy and lysosomal activity through ACSS2 is important for brain tumorigenesis and tumor survival. Acts as a chromatin-bound transcriptional coactivator that up-regulates histone acetylation and expression of neuronal genes. Can be recruited to the loci of memory-related neuronal genes to maintain a local acetyl-CoA pool, providing the substrate for histone acetylation and promoting the expression of specific genes, which is essential for maintaining long-term spatial memory. This Mus musculus (Mouse) protein is Acetyl-coenzyme A synthetase, cytoplasmic (Acss2).